A 1321-amino-acid polypeptide reads, in one-letter code: C-Jun-amino-terminal kinase-interacting protein 4 (1321 aa).

An N-acetylmethionine modification is found at Met-1. In terms of domain architecture, RH1 spans 7-95 (VVYQEEPGGS…ITQYEREKAL (89 aa)). Positions 66–166 (AQDQEHQVEL…NALHQRHTEM (101 aa)) form a coiled coil. 5 positions are modified to phosphoserine: Ser-109, Ser-183, Ser-185, Ser-194, and Ser-203. The tract at residues 203-292 (SLGIFPLPAG…SDVATIPTDT (90 aa)) is disordered. Thr-217 carries the phosphothreonine modification. Residues 236 to 253 (ELSQPRSHTSLKVSNSPE) are compositionally biased toward polar residues. Phosphoserine is present on residues Ser-238, Ser-251, Ser-265, Ser-268, and Ser-272. The segment covering 266 to 285 (DVSQGGSKATTPASTANSDV) has biased composition (polar residues). Residue Thr-292 is modified to Phosphothreonine. Phosphoserine occurs at positions 311, 329, 332, and 347. Residues Thr-348, Thr-365, and Thr-418 each carry the phosphothreonine modification. Positions 408 to 534 (REVENLILEN…LQEAVRWTEM (127 aa)) form a coiled coil. Residues 473–489 (LRKARAEAEDARQKAKD) show a composition bias toward basic and acidic residues. 2 disordered regions span residues 473-500 (LRKARAEAEDARQKAKDDDDSDIPTAQR) and 563-600 (SSNTTKKPEPPVNLKYNAPTSHVTPSVKKRSSTLSQLP). In terms of domain architecture, RH2 spans 500–571 (RKRFTRVEMA…SSSNTTKKPE (72 aa)). Thr-586 carries the phosphothreonine modification. Residue Ser-588 is modified to Phosphoserine. Position 595 is a phosphothreonine (Thr-595). A phosphoserine mark is found at Ser-705, Ser-728, Ser-730, Ser-732, and Ser-733. Residues 724–758 (SKQRSASQSSLDKLDQELKEQQKELKNQEELSSLV) are a coiled coil. The disordered stretch occupies residues 854–906 (GAATSPSTNGASPVMDKPPEMEAENSEVDENVPTAEEATEATEGNAGSAEDTV). Residues 855–864 (AATSPSTNGA) are compositionally biased toward polar residues. The span at 874–883 (MEAENSEVDE) shows a compositional bias: acidic residues. Residues 894-903 (ATEGNAGSAE) show a composition bias toward low complexity. Phosphoserine is present on Ser-1188. The tract at residues 1239 to 1266 (PQSSSSGTDLTGDKAGPSAQEPGSQTPL) is disordered. Thr-1264 is modified (phosphothreonine).

It belongs to the JIP scaffold family. In terms of assembly, homodimer. The homodimer interacts with ARF6, forming a heterotetramer. Homooligomer. Interacts with MAX, MAPK14, MAP3K3, MYC, KNS2 and MAP2K4. Interaction with KNS2 is important in the formation of ternary complex with MAPK8. Interacts with NFKB1. Interacts with PIP4P1. Interacts with PIKFYVE. Interacts with MAPK8, MAPK9, MAPK10. Post-translationally, phosphorylated by MAPK8 and MAPK14. As to expression, expressed only in testis on the round spermatids of stage I, II and II. Absent in spermatogonia and spermatocyte. Expressed in testis and in acute myeloid leukemia (AML) patients. In terms of tissue distribution, expressed in testis.

It is found in the cytoplasm. The protein localises to the perinuclear region. Its subcellular location is the lysosome membrane. The protein resides in the cytoplasmic vesicle. It localises to the secretory vesicle. It is found in the acrosome. Its activity is regulated as follows. May play a role in spermatozoa-egg-interaction. Functionally, the JNK-interacting protein (JIP) group of scaffold proteins selectively mediates JNK signaling by aggregating specific components of the MAPK cascade to form a functional JNK signaling module. Regulates lysosomal positioning by acting as an adapter protein which links PIP4P1-positive lysosomes to the dynein-dynactin complex. Assists PIKFYVE selective functionality in microtubule-based endosome-to-TGN trafficking. In Homo sapiens (Human), this protein is C-Jun-amino-terminal kinase-interacting protein 4.